Reading from the N-terminus, the 143-residue chain is Transcriptional regulator MraZ (143 aa).

SpoVT-AbrB domains lie at 5–47 and 76–119; these read TYTP…PREE and ADEQ…DAAA.

The protein belongs to the MraZ family. In terms of assembly, forms oligomers.

The protein resides in the cytoplasm. It localises to the nucleoid. In Corynebacterium diphtheriae (strain ATCC 700971 / NCTC 13129 / Biotype gravis), this protein is Transcriptional regulator MraZ.